Here is a 705-residue protein sequence, read N- to C-terminus: Polyribonucleotide nucleotidyltransferase (705 aa).

Residues aspartate 487 and aspartate 493 each contribute to the Mg(2+) site. One can recognise a KH domain in the interval 554–613; the sequence is PKILTMSINPDKIRDVIGPSGKQINKIIEDTGVKIDIEQDGTIFISSTDESMNQKAKKII. One can recognise an S1 motif domain in the interval 623 to 691; sequence GQLYLGKVKR…KQGRVNLSRK (69 aa).

The protein belongs to the polyribonucleotide nucleotidyltransferase family. The cofactor is Mg(2+).

The protein resides in the cytoplasm. It carries out the reaction RNA(n+1) + phosphate = RNA(n) + a ribonucleoside 5'-diphosphate. Functionally, involved in mRNA degradation. Catalyzes the phosphorolysis of single-stranded polyribonucleotides processively in the 3'- to 5'-direction. This is Polyribonucleotide nucleotidyltransferase from Bacillus licheniformis (strain ATCC 14580 / DSM 13 / JCM 2505 / CCUG 7422 / NBRC 12200 / NCIMB 9375 / NCTC 10341 / NRRL NRS-1264 / Gibson 46).